We begin with the raw amino-acid sequence, 821 residues long: Phenylalanine--tRNA ligase beta subunit (821 aa).

The 111-residue stretch at 39-149 (SENVKGIVLG…EDIALNHNLG (111 aa)) folds into the tRNA-binding domain. Residues 414–507 (LKKILIPLRR…RLIGYDMFDL (94 aa)) form the B5 domain. D485, D491, E494, and E495 together coordinate Mg(2+). Residues 727-820 (PTVPKMERDI…IEKKFSTKLR (94 aa)) enclose the FDX-ACB domain.

This sequence belongs to the phenylalanyl-tRNA synthetase beta subunit family. Type 1 subfamily. In terms of assembly, tetramer of two alpha and two beta subunits. Mg(2+) serves as cofactor.

Its subcellular location is the cytoplasm. The catalysed reaction is tRNA(Phe) + L-phenylalanine + ATP = L-phenylalanyl-tRNA(Phe) + AMP + diphosphate + H(+). This chain is Phenylalanine--tRNA ligase beta subunit, found in Prochlorococcus marinus subsp. pastoris (strain CCMP1986 / NIES-2087 / MED4).